We begin with the raw amino-acid sequence, 328 residues long: Hairy/enhancer-of-split related with YRPW motif-like protein (328 aa).

Positions 1–57 are disordered; that stretch reads MKRPKEPSGSDGESDGPIDVGQEGQLSQMARPLSTPSSSQMQARKKHRGIIEKRRRD. Over residues 24–42 the composition is skewed to polar residues; it reads GQLSQMARPLSTPSSSQMQ. Residues 42-111 form a transcriptional repression and interaction with NCOR1 and SIN3A region; it reads QARKKHRGII…GGTGFFDARA (70 aa). The region spanning 43-98 is the bHLH domain; that stretch reads ARKKHRGIIEKRRRDRINSSLSELRRLVPTAFEKQGSSKLEKAEVLQMTVDHLKML. Positions 116 to 153 constitute an Orange domain; it reads FRSIGFRECLTEVIRYLGVLEGPSSRADPVRIRLLSHL. The disordered stretch occupies residues 239–308; that stretch reads SRGASSTRRA…NSSSPGPAGR (70 aa). Residues 261-270 are compositionally biased toward low complexity; it reads APSSRAARSS.

The protein belongs to the HEY family. In terms of assembly, self-associates. Interacts with GATA4, GATA6, HES1, HEY1 and HEY2. Interacts with HDAC1, NCOR1 and SIN3A.

It is found in the nucleus. Functionally, downstream effector of Notch signaling which may be required for cardiovascular development. Transcriptional repressor which binds preferentially to the canonical E box sequence 5'-CACGTG-3'. Represses transcription by the cardiac transcriptional activators GATA4 and GATA6. This chain is Hairy/enhancer-of-split related with YRPW motif-like protein (HEYL), found in Homo sapiens (Human).